We begin with the raw amino-acid sequence, 272 residues long: Arylesterase (272 aa).

Residues 21–253 (KPVLFSHGWL…LKVYKDAPHG (233 aa)) enclose the AB hydrolase-1 domain. W29 serves as a coordination point for acetate. S95 is a catalytic residue. M96 is a binding site for acetate. Residues D223 and H252 contribute to the active site.

It belongs to the AB hydrolase superfamily. Bacterial non-heme haloperoxidase / perhydrolase family. In terms of assembly, dimer of trimers.

It carries out the reaction a phenyl acetate + H2O = a phenol + acetate + H(+). The catalysed reaction is peracetic acid + H2O = acetate + H2O2 + H(+). The enzyme catalyses a percarboxylic acid + H2O = a carboxylate + H2O2 + H(+). In terms of biological role, hydrolyzes phenolic esters, such as phenyl acetate, nitrophenyl acetate and naphtyl acetate. Can act on a wide range of esters, but reaction rate and enantioselectivity differ significantly depending on the substrate. Shows a preference for esters with small acyl groups. Also shows low perhydrolase activity, and catalyzes the reversible formation of peroxycarboxylic acids from carboxylic acids and hydrogen peroxide. In vitro, enzyme-generated peracetic acid oxidizes bromide ion to bromonium, which reacts with monochlorodimedone to form bromochlorodimedone. This Pseudomonas fluorescens protein is Arylesterase.